The following is a 145-amino-acid chain: MKFTIERSHLIKPLQQVSGALGGRPTLPILGNLLLKVEDNVLSMTATDLEVELVSKVTLEGDFEAGSITVPSRKFLDICRGLPDDSIITFVLEGDRVQVRSGRSRFSLATLPANDFPNIEDWQSEVEVSLTQSDLRTLIEKTQFS.

The protein belongs to the beta sliding clamp family. Forms a ring-shaped head-to-tail homodimer around DNA which binds and tethers DNA polymerases and other proteins to the DNA. The DNA replisome complex has a single clamp-loading complex (3 tau and 1 each of delta, delta', psi and chi subunits) which binds 3 Pol III cores (1 core on the leading strand and 2 on the lagging strand) each with a beta sliding clamp dimer. Additional proteins in the replisome are other copies of gamma, psi and chi, Ssb, DNA helicase and RNA primase.

Its subcellular location is the cytoplasm. Its function is as follows. Confers DNA tethering and processivity to DNA polymerases and other proteins. Acts as a clamp, forming a ring around DNA (a reaction catalyzed by the clamp-loading complex) which diffuses in an ATP-independent manner freely and bidirectionally along dsDNA. Initially characterized for its ability to contact the catalytic subunit of DNA polymerase III (Pol III), a complex, multichain enzyme responsible for most of the replicative synthesis in bacteria; Pol III exhibits 3'-5' exonuclease proofreading activity. The beta chain is required for initiation of replication as well as for processivity of DNA replication. This chain is Beta sliding clamp (dnaN), found in Vibrio harveyi (Beneckea harveyi).